The sequence spans 335 residues: MIEAKSEHKIAPWKIEEVNALKELLKSSNIIALIDMMEVPAVQLQEIRDKIRDQMTLKMSRNTLMKRAIEEVAEETGNPEFAKLVDYMDKGAAIIATEMNPFKLYKTLDESKSPAPVKGGAIAPCDIEVKAGSTGMPPGPFLSELKAVGIPAAIDKGKIGIKEDKIVVKEGEVVSQKLAVVLSALDIKPVTVGLNVLGVYEDGVIYTESDLKIDEEEFVGKIQKAYTSAFNLSVNAVIPTSATVETIVQKAFNDAKAVSVESAFVTDKTADAILGKAYAQMIAVAGLAGDDALDEDLKGKISSGAAAPVEEAPVEEKKEEKKEEAAAPAGLGMLF.

Positions 304–335 are disordered; sequence GAAAPVEEAPVEEKKEEKKEEAAAPAGLGMLF. Residues 314 to 325 show a composition bias toward basic and acidic residues; sequence VEEKKEEKKEEA.

This sequence belongs to the universal ribosomal protein uL10 family. Part of the 50S ribosomal subunit. Homodimer, it forms part of the ribosomal stalk which helps the ribosome interact with GTP-bound translation factors. Forms both a pentameric L10(L12)2(L12)2 and heptameric L10(L12)2(L12)2(L12)2 complex, where L10 forms an elongated spine to which the L12 dimers bind in a sequential fashion. The proportion of heptameric complexes increases during cell growth.

Functionally, forms part of the ribosomal stalk, playing a central role in the interaction of the ribosome with GTP-bound translation factors. The sequence is that of Large ribosomal subunit protein uL10 from Methanococcus maripaludis (strain DSM 14266 / JCM 13030 / NBRC 101832 / S2 / LL).